A 235-amino-acid polypeptide reads, in one-letter code: Leucyl/phenylalanyl-tRNA--protein transferase (235 aa).

It belongs to the L/F-transferase family.

The protein localises to the cytoplasm. The catalysed reaction is N-terminal L-lysyl-[protein] + L-leucyl-tRNA(Leu) = N-terminal L-leucyl-L-lysyl-[protein] + tRNA(Leu) + H(+). It catalyses the reaction N-terminal L-arginyl-[protein] + L-leucyl-tRNA(Leu) = N-terminal L-leucyl-L-arginyl-[protein] + tRNA(Leu) + H(+). It carries out the reaction L-phenylalanyl-tRNA(Phe) + an N-terminal L-alpha-aminoacyl-[protein] = an N-terminal L-phenylalanyl-L-alpha-aminoacyl-[protein] + tRNA(Phe). Functionally, functions in the N-end rule pathway of protein degradation where it conjugates Leu, Phe and, less efficiently, Met from aminoacyl-tRNAs to the N-termini of proteins containing an N-terminal arginine or lysine. This is Leucyl/phenylalanyl-tRNA--protein transferase from Methylococcus capsulatus (strain ATCC 33009 / NCIMB 11132 / Bath).